The primary structure comprises 613 residues: 9-cis-epoxycarotenoid dioxygenase NCED5, chloroplastic (613 aa).

Positions 1–15 are enriched in polar residues; it reads MPTTFTPNSPASSCS. The transit peptide at 1 to 36 directs the protein to the chloroplast; that stretch reads MPTTFTPNSPASSCSIHHRASPSRGARNSVRFTRPR. A disordered region spans residues 1 to 62; that stretch reads MPTTFTPNSP…PPAYVPPPPP (62 aa). Residues 37–50 show a composition bias toward low complexity; sequence AAAAATNSVLSAPS. The span at 51-62 shows a compositional bias: pro residues; the sequence is SVPPAYVPPPPP. 4 residues coordinate Fe cation: His-305, His-354, His-419, and His-600.

Belongs to the carotenoid oxygenase family. It depends on Fe(2+) as a cofactor.

The protein resides in the plastid. Its subcellular location is the chloroplast. It carries out the reaction a 9-cis-epoxycarotenoid + O2 = a 12'-apo-carotenal + 2-cis,4-trans-xanthoxin. It catalyses the reaction 9-cis-violaxanthin + O2 = (3S,5R,6S)-5,6-epoxy-3-hydroxy-5,6-dihydro-12'-apo-beta-caroten-12'-al + 2-cis,4-trans-xanthoxin. The catalysed reaction is 9'-cis-neoxanthin + O2 = (3S,5R,6R)-3,5-dihydroxy-6,7-didehydro-5,6-dihydro-12'-apo-beta-caroten-12'-al + 2-cis,4-trans-xanthoxin. In terms of biological role, has a 11,12(11',12') 9-cis epoxycarotenoid cleavage activity. Catalyzes the first step of abscisic-acid biosynthesis from carotenoids. This chain is 9-cis-epoxycarotenoid dioxygenase NCED5, chloroplastic, found in Oryza sativa subsp. japonica (Rice).